The primary structure comprises 742 residues: Photosystem I P700 chlorophyll a apoprotein A2 (742 aa).

8 helical membrane passes run 46–69, 135–158, 175–199, 273–291, 336–359, 375–401, 423–445, and 525–543; these read LFSTHFGHLAIIALWVAGNLFHIA, LFQASIFMSILACWTLFAGWLHLQ, LNHHLAVLFGFSSIAWTGHLVHVAI, IAHHHIAIGTVFIIAGHMY, LHFQLGLALAALGVATSLVAQHMG, SALYTHHQYIAMFLMVGAFAHGAIFFV, ALISHLSWVTMILGFHTLGIYVH, and FLVHHAIALGLHTTALILI. [4Fe-4S] cluster is bound by residues Cys567 and Cys576. Transmembrane regions (helical) follow at residues 583–604 and 651–673; these read AMYLAMFWALNLIAWVTFYWHW and LSVWAWMFLFGHLVWATGFMFLI. Residues His662, Met670, and Tyr678 each coordinate divinyl chlorophyll a. A phylloquinone-binding site is contributed by Trp679. The helical transmembrane segment at 715–735 threads the bilayer; the sequence is LVGLAHFTIGNILTFGAFVIA.

Belongs to the PsaA/PsaB family. As to quaternary structure, the PsaA/B heterodimer binds the P700 divinyl chlorophyll special pair and subsequent electron acceptors. PSI consists of a core antenna complex that captures photons, and an electron transfer chain that converts photonic excitation into a charge separation. The cyanobacterial PSI reaction center is composed of one copy each of PsaA,B,C,D,E,F,I,J,K,L,M and X, and forms trimeric complexes. PSI electron transfer chain: 5 divinyl chlorophyll a, 1 divinyl chlorophyll a', 2 phylloquinones and 3 4Fe-4S clusters. PSI core antenna: 90 divinyl chlorophyll a, 22 carotenoids, 3 phospholipids and 1 galactolipid. P700 is a divinyl chlorophyll a/divinyl chlorophyll a' dimer, A0 is one or more divinyl chlorophyll a, A1 is one or both phylloquinones and FX is a shared 4Fe-4S iron-sulfur center. is required as a cofactor.

Its subcellular location is the cellular thylakoid membrane. The catalysed reaction is reduced [plastocyanin] + hnu + oxidized [2Fe-2S]-[ferredoxin] = oxidized [plastocyanin] + reduced [2Fe-2S]-[ferredoxin]. PsaA and PsaB bind P700, the primary electron donor of photosystem I (PSI), as well as the electron acceptors A0, A1 and FX. PSI is a plastocyanin/cytochrome c6-ferredoxin oxidoreductase, converting photonic excitation into a charge separation, which transfers an electron from the donor P700 chlorophyll pair to the spectroscopically characterized acceptors A0, A1, FX, FA and FB in turn. Oxidized P700 is reduced on the lumenal side of the thylakoid membrane by plastocyanin or cytochrome c6. The sequence is that of Photosystem I P700 chlorophyll a apoprotein A2 from Prochlorococcus marinus (strain MIT 9515).